The following is a 257-amino-acid chain: Gene 3 protein (257 aa).

A compositionally biased stretch (polar residues) spans 163-176 (STENLLGQTQSSTH). The interval 163-257 (STENLLGQTQ…SDSSVSSVFF (95 aa)) is disordered. The span at 214-240 (SIREETVSGMARAREECNSPSEHDRLT) shows a compositional bias: basic and acidic residues.

The protein is Gene 3 protein of Equine herpesvirus 1 (strain Ab4p) (EHV-1).